The primary structure comprises 158 residues: Complexin-3 (158 aa).

The interval 14–47 (KNLTGSLGGGEDKGDGDKSAAEAQGMSREEYEEY) is disordered. Over residues 23-33 (GEDKGDGDKSA) the composition is skewed to basic and acidic residues. Residues 39–74 (MSREEYEEYQKQLVEEKMERDAQFTQRKAERATLRS) adopt a coiled-coil conformation. Cysteine 155 is modified (cysteine methyl ester). Cysteine 155 is lipidated: S-farnesyl cysteine. A propeptide spans 156 to 158 (HIM) (removed in mature form).

Belongs to the complexin/synaphin family. Binds to the SNARE core complex containing SNAP25, VAMP2 and STX1A. Farnesylation mediates presynaptic targeting. As to expression, present in many brain regions, including hippocampus and cerebellum (at protein level). Expressed in the retina (at protein level). Expressed in retinal amacrine cells (at protein level). Expressed in retinal photoreceptor ribbon synapses. Expressed in the retinal inner nuclear layer, at bipolar cells (at protein level). Expressed in cone photoreceptor synaptic terminals (at protein level).

The protein localises to the synapse. The protein resides in the cell membrane. Functionally, complexin that regulates SNARE protein complex-mediated synaptic vesicle fusion. Required for the maintenance of synaptic ultrastructure in the adult retina. Positively regulates synaptic transmission through synaptic vesicle availability and exocytosis of neurotransmitters at photoreceptor ribbon synapses in the retina. Suppresses tonic photoreceptor activity and baseline 'noise' by suppression of Ca(2+) vesicle tonic release and the facilitation of evoked synchronous and asynchronous Ca(2+) vesicle release. The sequence is that of Complexin-3 (Cplx3) from Mus musculus (Mouse).